A 503-amino-acid chain; its full sequence is Probable cytosol aminopeptidase (503 aa).

Residues Lys-268 and Asp-273 each coordinate Mn(2+). Lys-280 is an active-site residue. Mn(2+) contacts are provided by Asp-291, Asp-350, and Glu-352. Residue Arg-354 is part of the active site.

The protein belongs to the peptidase M17 family. The cofactor is Mn(2+).

The protein resides in the cytoplasm. It catalyses the reaction Release of an N-terminal amino acid, Xaa-|-Yaa-, in which Xaa is preferably Leu, but may be other amino acids including Pro although not Arg or Lys, and Yaa may be Pro. Amino acid amides and methyl esters are also readily hydrolyzed, but rates on arylamides are exceedingly low.. The enzyme catalyses Release of an N-terminal amino acid, preferentially leucine, but not glutamic or aspartic acids.. Functionally, presumably involved in the processing and regular turnover of intracellular proteins. Catalyzes the removal of unsubstituted N-terminal amino acids from various peptides. This chain is Probable cytosol aminopeptidase, found in Corynebacterium efficiens (strain DSM 44549 / YS-314 / AJ 12310 / JCM 11189 / NBRC 100395).